The sequence spans 331 residues: UPF0194 membrane protein CKO_02332 (331 aa).

The signal sequence occupies residues 1 to 15 (MKKPVVIALAVAALA). Positions 142-207 (ISANDLENAR…ELDLQDTTLI (66 aa)) form a coiled coil.

It belongs to the UPF0194 family.

Its subcellular location is the periplasm. In Citrobacter koseri (strain ATCC BAA-895 / CDC 4225-83 / SGSC4696), this protein is UPF0194 membrane protein CKO_02332.